A 539-amino-acid polypeptide reads, in one-letter code: MSSNPENSGVNANNNTGTGNADAITGAQQNMVLQPRQLQEMAAKFRTLLTEARNVGETTPRGKELMFQAAKIKQVYDALTLNRRRQQAAQAYNNTSNSNSSNPASIPTENVPNSSQQQQQQQQQTRNNSNKFSNMIKQVLTPEENQEYEKLWQNFQVRHTSIKEKETYLKQNIDRLEQEINKQTDEGPKQQLQEKKIELLNDWKVLKIEYTKLFNNYQNSKKTFYVECARHNPALHKFLQESTQQQRVQQQRVQQQQQQQQQQQQQQQQQQQQQQQRQGQNQRKISSSNSTEIPSVTGPDALKSQQQQQNTITATNNPRGNVNTSQTEQSKAKVTNVNATASMLNNISSSKSAIFKQTEPAIPISENISTKTPAPVAYRSNRPTITGGSAMNASALNTPATTKLPPYEMDTQRVMSKRKLRELVKTVGIDEGDGETVIDGDVEELLLDLADDFVTNVTAFSCRLAKHRKSDNLEARDIQLHLERNWNIRIPGYSADEIRSTRKWNPSQNYNQKLQSITSDKVAAAKNNGNNVASLNTKK.

Disordered regions lie at residues 1 to 28 (MSSN…TGAQ) and 86 to 129 (QQAA…RNNS). Serine 2 is modified (N-acetylserine). 2 stretches are compositionally biased toward low complexity: residues 7 to 27 (NSGV…ITGA) and 87 to 105 (QAAQ…NPAS). Serine 129 is modified (phosphoserine). Coiled-coil stretches lie at residues 153–202 (QNFQ…LLND) and 239–285 (LQES…QRKI). Residues 274–283 (QQQRQGQNQR) show a composition bias toward low complexity. Residues 274–332 (QQQRQGQNQRKISSSNSTEIPSVTGPDALKSQQQQQNTITATNNPRGNVNTSQTEQSKA) form a disordered region. 2 stretches are compositionally biased toward polar residues: residues 284 to 294 (KISSSNSTEIP) and 310 to 332 (NTIT…QSKA). Serine 286 carries the phosphoserine modification. Positions 413–490 (RVMSKRKLRE…HLERNWNIRI (78 aa)) constitute a Histone-fold domain.

The protein belongs to the TAF12 family. Component of the 1.8 MDa SAGA (Spt-Ada-Gcn5 acetyltransferase) complex, which is composed of 19 subunits TRA1, SPT7, TAF5, NGG1/ADA3, SGF73, SPT20/ADA5, SPT8, TAF12, TAF6, HFI1/ADA1, UBP8, GCN5, ADA2, SPT3, SGF29, TAF10, TAF9, SGF11 and SUS1. The SAGA complex is composed of 4 modules, namely the HAT (histone acetyltransferase) module (GCN5, ADA2, NGG1/ADA3 and SGF29), the DUB (deubiquitinating) module (UBP8, SGF11, SGF73 and SUS1), the core or TAF (TBP-associated factor) module (TAF5, TAF6, TAF9, TAF10 and TAF12), and the Tra1 or SPT (Suppressor of Ty) module (TRA1, HFI1/ADA1, SPT3, SPT7, SPT8 and SPT20/ADA5). The Tra1/SPT module binds activators, the core module recruits TBP (TATA-binding protein), the HAT module contains the histone H3 acetyltransferase GCN5, and the DUB module comprises the histone H2B deubiquitinase UBP8. Also identified in an altered form of SAGA, named SALSA (SAGA altered, Spt8 absent) or SLIK (SAGA-like) complex, which contains a C-terminal truncated form of SPT7 and is missing SPT8. However, it has been shown that the SAGA and SAGA-like SALSA/SLIK transcriptional coactivators are structurally and biochemically equivalent. Component of the 1.2 MDa TFIID complex, which is composed of TATA-binding protein (TBP) and the 14 TBP-associated factors (TAFs). It comprises 1 copy of each TAF1, TAF2, TAF3, TAF7, TAF8, TAF11, TAF13, 2 copies of each TAF4, TAF5, TAF6, TAF9, TAF10, TAF12, and 3 copies of TAF14. In TFIID, TAF12 heterodimerizes with TAF4, forming ultimately an octamer consisting of a TAF6-TAF9 heterotetramer core flanked by TAF4-TAF12 dimers on either side, similar to the histone H2A-H2B-H3-H4 octamer.

Its subcellular location is the nucleus. Functionally, functions as a component of both the DNA-binding general transcription initiation factor complex TFIID and the transcription coactivator SAGA complex. Binding of TFIID to a promoter (with or without TATA element) is the initial step in pre-initiation complex (PIC) formation. TFIID plays a key role in the regulation of gene expression by RNA polymerase II through different activities such as transcription activator interaction, core promoter recognition and selectivity, TFIIA and TFIIB interaction, chromatin modification (histone acetylation by TAF1), facilitation of DNA opening and initiation of transcription. SAGA acts as a general cofactor required for essentially all RNA polymerase II transcription. At the promoters, SAGA is required for transcription pre-initiation complex (PIC) recruitment. It influences RNA polymerase II transcriptional activity through different activities such as TBP interaction (via core/TAF module) and promoter selectivity, interaction with transcription activators (via Tra1/SPT module), and chromatin modification through histone acetylation (via HAT module) and deubiquitination (via DUB module). SAGA preferentially acetylates histones H3 (to form H3K9ac, H3K14ac, H3K18ac and H3K23ac) and H2B and deubiquitinates histone H2B. SAGA interacts with DNA via upstream activating sequences (UASs). Also identified in a modified version of SAGA named SALSA or SLIK. The cleavage of SPT7 and the absence of the SPT8 subunit in SLIK neither drive any major conformational differences in its structure compared with SAGA, nor significantly affect HAT, DUB, or DNA-binding activities. The sequence is that of SAGA complex/transcription factor TFIID complex subunit TAF12 (TAF12) from Saccharomyces cerevisiae (strain ATCC 204508 / S288c) (Baker's yeast).